The primary structure comprises 145 residues: Shadow of prion protein (145 aa).

The first 24 residues, 1-24 (MNWAAAVCWALLLAATFLCDGSAA), serve as a signal peptide directing secretion. N-linked (GlcNAc...) asparagine glycosylation occurs at asparagine 105. Residue serine 119 is the site of GPI-anchor amidated serine attachment. Positions 120 to 145 (GAGPTGHRHLCPLLGGALGALRLLRP) are cleaved as a propeptide — removed in mature form.

It belongs to the SPRN family. Post-translationally, N-glycosylated. Mainly expressed in brain.

Its subcellular location is the cell membrane. Functionally, prion-like protein that has PrP(C)-like neuroprotective activity. May act as a modulator for the biological actions of normal and abnormal PrP. The polypeptide is Shadow of prion protein (SPRN) (Ovis aries (Sheep)).